The sequence spans 219 residues: MVLRSQILAHKLALPTAEQALPGRAEPLPVAQQHHVNGNPIKPPFPAPMQQAVFGLGCFWGAERRFWQQPGVFSTAVGYAGGFTPNPTYEEVCSGLTGHTEVVLVVFDPQQTSFDALLKVFWEAHNPTQGMRQGNDQGTQYRSAIYCQDHAQLEAALASQARFQAELDKAGLGSITTEICEAPIFYYAETYHQQYLAKNPGGYCGLGGTGVCLPPEPAA.

C58 is an active-site residue.

This sequence belongs to the MsrA Met sulfoxide reductase family.

The enzyme catalyses L-methionyl-[protein] + [thioredoxin]-disulfide + H2O = L-methionyl-(S)-S-oxide-[protein] + [thioredoxin]-dithiol. It carries out the reaction [thioredoxin]-disulfide + L-methionine + H2O = L-methionine (S)-S-oxide + [thioredoxin]-dithiol. Has an important function as a repair enzyme for proteins that have been inactivated by oxidation. Catalyzes the reversible oxidation-reduction of methionine sulfoxide in proteins to methionine. This chain is Peptide methionine sulfoxide reductase MsrA, found in Ectopseudomonas mendocina (strain ymp) (Pseudomonas mendocina).